Here is a 180-residue protein sequence, read N- to C-terminus: Large ribosomal subunit protein uL5 (180 aa).

It belongs to the universal ribosomal protein uL5 family. As to quaternary structure, part of the 50S ribosomal subunit; part of the 5S rRNA/L5/L18/L25 subcomplex. Contacts the 5S rRNA and the P site tRNA. Forms a bridge to the 30S subunit in the 70S ribosome.

Functionally, this is one of the proteins that bind and probably mediate the attachment of the 5S RNA into the large ribosomal subunit, where it forms part of the central protuberance. In the 70S ribosome it contacts protein S13 of the 30S subunit (bridge B1b), connecting the 2 subunits; this bridge is implicated in subunit movement. Contacts the P site tRNA; the 5S rRNA and some of its associated proteins might help stabilize positioning of ribosome-bound tRNAs. The chain is Large ribosomal subunit protein uL5 from Lactiplantibacillus plantarum (strain ATCC BAA-793 / NCIMB 8826 / WCFS1) (Lactobacillus plantarum).